The sequence spans 385 residues: DNA replication and repair protein RecF (385 aa).

Residue 30–37 participates in ATP binding; sequence GPNGNGKT.

Belongs to the RecF family.

Its subcellular location is the cytoplasm. Functionally, the RecF protein is involved in DNA metabolism; it is required for DNA replication and normal SOS inducibility. RecF binds preferentially to single-stranded, linear DNA. It also seems to bind ATP. The chain is DNA replication and repair protein RecF from Mycobacterium leprae (strain Br4923).